Reading from the N-terminus, the 258-residue chain is Deoxyribose-phosphate aldolase 2 (258 aa).

The active-site Proton donor/acceptor is the aspartate 102. Lysine 165 acts as the Schiff-base intermediate with acetaldehyde in catalysis. Lysine 199 (proton donor/acceptor) is an active-site residue.

It belongs to the DeoC/FbaB aldolase family. DeoC type 2 subfamily.

It localises to the cytoplasm. It catalyses the reaction 2-deoxy-D-ribose 5-phosphate = D-glyceraldehyde 3-phosphate + acetaldehyde. It functions in the pathway carbohydrate degradation; 2-deoxy-D-ribose 1-phosphate degradation; D-glyceraldehyde 3-phosphate and acetaldehyde from 2-deoxy-alpha-D-ribose 1-phosphate: step 2/2. Catalyzes a reversible aldol reaction between acetaldehyde and D-glyceraldehyde 3-phosphate to generate 2-deoxy-D-ribose 5-phosphate. The chain is Deoxyribose-phosphate aldolase 2 (deoC2) from Vibrio vulnificus (strain YJ016).